Consider the following 493-residue polypeptide: Glycerol kinase (493 aa).

T11 provides a ligand contact to ADP. T11, T12, and S13 together coordinate ATP. Position 11 (T11) interacts with sn-glycerol 3-phosphate. R15 is a binding site for ADP. Sn-glycerol 3-phosphate-binding residues include R80, E81, Y132, and D241. The glycerol site is built by R80, E81, Y132, D241, and Q242. Positions 263 and 306 each coordinate ADP. The ATP site is built by T263, G306, Q310, and G408. An ADP-binding site is contributed by G408.

It belongs to the FGGY kinase family.

The enzyme catalyses glycerol + ATP = sn-glycerol 3-phosphate + ADP + H(+). The protein operates within polyol metabolism; glycerol degradation via glycerol kinase pathway; sn-glycerol 3-phosphate from glycerol: step 1/1. Inhibited by fructose 1,6-bisphosphate (FBP). Key enzyme in the regulation of glycerol uptake and metabolism. Catalyzes the phosphorylation of glycerol to yield sn-glycerol 3-phosphate. In Cereibacter sphaeroides (strain KD131 / KCTC 12085) (Rhodobacter sphaeroides), this protein is Glycerol kinase.